Consider the following 184-residue polypeptide: Holliday junction branch migration complex subunit RuvA (184 aa).

A domain I region spans residues 1-62 (MIVGLVGEVL…EDSESLYGFV (62 aa)). Positions 63–134 (DINEKKMFDR…ELGEFDISES (72 aa)) are domain II. Residues 134 to 135 (SN) form a flexible linker region. The interval 136–184 (VTSSAFQEASMALQSLGFKKEQIQKALQECTATDTASLVKEALKKIQKL) is domain III.

Belongs to the RuvA family. In terms of assembly, homotetramer. Forms an RuvA(8)-RuvB(12)-Holliday junction (HJ) complex. HJ DNA is sandwiched between 2 RuvA tetramers; dsDNA enters through RuvA and exits via RuvB. An RuvB hexamer assembles on each DNA strand where it exits the tetramer. Each RuvB hexamer is contacted by two RuvA subunits (via domain III) on 2 adjacent RuvB subunits; this complex drives branch migration. In the full resolvosome a probable DNA-RuvA(4)-RuvB(12)-RuvC(2) complex forms which resolves the HJ.

Its subcellular location is the cytoplasm. Functionally, the RuvA-RuvB-RuvC complex processes Holliday junction (HJ) DNA during genetic recombination and DNA repair, while the RuvA-RuvB complex plays an important role in the rescue of blocked DNA replication forks via replication fork reversal (RFR). RuvA specifically binds to HJ cruciform DNA, conferring on it an open structure. The RuvB hexamer acts as an ATP-dependent pump, pulling dsDNA into and through the RuvAB complex. HJ branch migration allows RuvC to scan DNA until it finds its consensus sequence, where it cleaves and resolves the cruciform DNA. The chain is Holliday junction branch migration complex subunit RuvA from Nitratiruptor sp. (strain SB155-2).